The sequence spans 405 residues: Imidazolonepropionase (405 aa).

Residues histidine 70 and histidine 72 each contribute to the Fe(3+) site. Zn(2+) is bound by residues histidine 70 and histidine 72. Residues arginine 79, tyrosine 142, and histidine 175 each contribute to the 4-imidazolone-5-propanoate site. Tyrosine 142 contributes to the N-formimidoyl-L-glutamate binding site. Histidine 240 contacts Fe(3+). Histidine 240 is a Zn(2+) binding site. Glutamine 243 contributes to the 4-imidazolone-5-propanoate binding site. A Fe(3+)-binding site is contributed by aspartate 315. Position 315 (aspartate 315) interacts with Zn(2+). Residues asparagine 317 and glycine 319 each coordinate N-formimidoyl-L-glutamate. Residue threonine 320 participates in 4-imidazolone-5-propanoate binding.

Belongs to the metallo-dependent hydrolases superfamily. HutI family. Requires Zn(2+) as cofactor. It depends on Fe(3+) as a cofactor.

Its subcellular location is the cytoplasm. It carries out the reaction 4-imidazolone-5-propanoate + H2O = N-formimidoyl-L-glutamate. It participates in amino-acid degradation; L-histidine degradation into L-glutamate; N-formimidoyl-L-glutamate from L-histidine: step 3/3. Functionally, catalyzes the hydrolytic cleavage of the carbon-nitrogen bond in imidazolone-5-propanoate to yield N-formimidoyl-L-glutamate. It is the third step in the universal histidine degradation pathway. This chain is Imidazolonepropionase, found in Ectopseudomonas mendocina (strain ymp) (Pseudomonas mendocina).